The primary structure comprises 479 residues: Serine protease HTRA1A (479 aa).

The N-terminal stretch at 1 to 18 (MILVTLFCICALVTSLQA) is a signal peptide. Positions 27–111 (VIGGCPSHCD…RGKQGVCVCK (85 aa)) constitute an IGFBP N-terminal domain. Cystine bridges form between cysteine 31-cysteine 56, cysteine 35-cysteine 58, cysteine 40-cysteine 59, cysteine 47-cysteine 62, cysteine 70-cysteine 87, and cysteine 81-cysteine 108. Positions 96–155 (SATVRRRGKQGVCVCKSSDPVCGSDGVSYRDICELKRVSNRAQSLQQPPVLFIQRGACGT) constitute a Kazal-like domain. Residues 203–363 (GSGFVVSDDG…IPSDKIRQFL (161 aa)) form a serine protease region. Catalysis depends on charge relay system residues histidine 219, aspartate 249, and serine 327. In terms of domain architecture, PDZ spans 364-466 (AESYDRLARG…LRVVVRRGNE (103 aa)).

Belongs to the peptidase S1C family. Forms homotrimers. In the presence of substrate, may form higher-order multimers in a PDZ-independent manner.

Its subcellular location is the secreted. It localises to the cytoplasm. The protein resides in the cytosol. Serine protease with a variety of targets, including extracellular matrix proteins and proteoglycans. Through cleavage of proteoglycans, may release soluble FGF-glycosaminoglycan complexes that promote the range and intensity of FGF signals in the extracellular space. Regulates the availability of insulin-like growth factors (IGFs) by cleaving IGF-binding proteins. Inhibits signaling mediated by TGF-beta family members. Consequently, may regulate many physiological processes. Intracellularly, degrades TSC2, leading to the activation of TSC2 downstream targets. The protein is Serine protease HTRA1A (htra1a) of Danio rerio (Zebrafish).